The sequence spans 330 residues: D-cysteine desulfhydrase (330 aa).

Lys52 is subject to N6-(pyridoxal phosphate)lysine.

Belongs to the ACC deaminase/D-cysteine desulfhydrase family. In terms of assembly, homodimer. Pyridoxal 5'-phosphate is required as a cofactor.

It carries out the reaction D-cysteine + H2O = hydrogen sulfide + pyruvate + NH4(+) + H(+). In terms of biological role, catalyzes the alpha,beta-elimination reaction of D-cysteine and of several D-cysteine derivatives. It could be a defense mechanism against D-cysteine. The chain is D-cysteine desulfhydrase from Yersinia enterocolitica serotype O:8 / biotype 1B (strain NCTC 13174 / 8081).